The primary structure comprises 256 residues: 1-(5-phosphoribosyl)-5-[(5-phosphoribosylamino)methylideneamino] imidazole-4-carboxamide isomerase (256 aa).

Residue aspartate 8 is the Proton acceptor of the active site. Aspartate 129 acts as the Proton donor in catalysis.

The protein belongs to the HisA/HisF family.

Its subcellular location is the cytoplasm. It carries out the reaction 1-(5-phospho-beta-D-ribosyl)-5-[(5-phospho-beta-D-ribosylamino)methylideneamino]imidazole-4-carboxamide = 5-[(5-phospho-1-deoxy-D-ribulos-1-ylimino)methylamino]-1-(5-phospho-beta-D-ribosyl)imidazole-4-carboxamide. The protein operates within amino-acid biosynthesis; L-histidine biosynthesis; L-histidine from 5-phospho-alpha-D-ribose 1-diphosphate: step 4/9. The sequence is that of 1-(5-phosphoribosyl)-5-[(5-phosphoribosylamino)methylideneamino] imidazole-4-carboxamide isomerase from Prochlorococcus marinus (strain NATL1A).